The chain runs to 508 residues: D-alanine--D-alanyl carrier protein ligase (508 aa).

An ATP-binding site is contributed by 152-153 (TS). Asp-198 is a D-alanine binding site. 293–298 (NTYGPT) serves as a coordination point for ATP. Val-302 contributes to the D-alanine binding site. ATP is bound by residues Asp-384, 396 to 399 (YRGR), and Lys-495. Lys-495 provides a ligand contact to D-alanine.

This sequence belongs to the ATP-dependent AMP-binding enzyme family. DltA subfamily.

It localises to the cytoplasm. It carries out the reaction holo-[D-alanyl-carrier protein] + D-alanine + ATP = D-alanyl-[D-alanyl-carrier protein] + AMP + diphosphate. Its pathway is cell wall biogenesis; lipoteichoic acid biosynthesis. Catalyzes the first step in the D-alanylation of lipoteichoic acid (LTA), the activation of D-alanine and its transfer onto the D-alanyl carrier protein (Dcp) DltC. In an ATP-dependent two-step reaction, forms a high energy D-alanyl-AMP intermediate, followed by transfer of the D-alanyl residue as a thiol ester to the phosphopantheinyl prosthetic group of the Dcp. D-alanylation of LTA plays an important role in modulating the properties of the cell wall in Gram-positive bacteria, influencing the net charge of the cell wall. The protein is D-alanine--D-alanyl carrier protein ligase of Lactiplantibacillus plantarum (strain ATCC BAA-793 / NCIMB 8826 / WCFS1) (Lactobacillus plantarum).